Consider the following 206-residue polypeptide: Elongation factor Ts (206 aa).

Positions 81 to 84 (TDFV) are involved in Mg(2+) ion dislocation from EF-Tu.

This sequence belongs to the EF-Ts family.

It localises to the cytoplasm. Associates with the EF-Tu.GDP complex and induces the exchange of GDP to GTP. It remains bound to the aminoacyl-tRNA.EF-Tu.GTP complex up to the GTP hydrolysis stage on the ribosome. The protein is Elongation factor Ts of Maridesulfovibrio salexigens (strain ATCC 14822 / DSM 2638 / NCIMB 8403 / VKM B-1763) (Desulfovibrio salexigens).